We begin with the raw amino-acid sequence, 507 residues long: Maturase K (507 aa).

This sequence belongs to the intron maturase 2 family. MatK subfamily.

It is found in the plastid. It localises to the chloroplast. Functionally, usually encoded in the trnK tRNA gene intron. Probably assists in splicing its own and other chloroplast group II introns. In Buxus microphylla (Littleleaf boxwood), this protein is Maturase K.